We begin with the raw amino-acid sequence, 382 residues long: Hyaluronidase (382 aa).

Residues 1–28 (MSRPLVITEGMMIGVLLMLAPINALLLG) constitute a signal peptide (or 24). Residues 29–33 (FVQST) constitute a propeptide that is removed on maturation. Disulfide bonds link C54–C345 and C221–C233. N115 carries an N-linked (GlcNAc...) asparagine glycan. Residue E145 is the Proton donor of the active site. N-linked (GlcNAc...) (complex) asparagine glycosylation occurs at N263.

The protein belongs to the glycosyl hydrolase 56 family. Homotetramer. Post-translationally, N-glycosylated. Glycans found include a majority of small oligosaccharides (Man1-3GlcNAc2), most of which are either alpha 1,3-monofucosylated or alpha 1,3-(alpha 1,6-)difucosylated at the innermost GlcNAc residue, approximately 5% of high-mannose type structures, and 8% contains the terminal trisaccharide GalNAc beta 1-4[Fuc alpha 1-3]GlcNAc beta 1-in beta 1,2-linkage to the core alpha 1,3-mannosyl residue. In terms of tissue distribution, expressed in the venom glands of worker bees. It is also detected in the testes of drones but not in the queen-bee venom glands or in pupae.

It is found in the secreted. It carries out the reaction Random hydrolysis of (1-&gt;4)-linkages between N-acetyl-beta-D-glucosamine and D-glucuronate residues in hyaluronate.. Hydrolyzes high molecular weight hyaluronic acid to produce small oligosaccharides. This is Hyaluronidase from Apis mellifera (Honeybee).